The chain runs to 292 residues: MGRQKELVSRCGEMLHIRYRLLRQALAECLGTLILVMFGCGSVAQVVLSRGTHGGFLTINLAFGFAVTLGILIAGQVSGAHLNPAVTFAMCFLAREPWIKLPIYTLAQTLGAFLGAGIVFGLYYDAIWHFADNQLFVSGPNGTAGIFATYPSGHLDMINGFFDQFIGTASLIVCVLAIVDPYNNPVPRGLEAFTVGLVVLVIGTSMGFNSGYAVNPARDFGPRLFTALAGWGSAVFTTGQHWWWVPIVSPLLGSIAGVFVYQLMIGCHLEQPPPSNEEENVKLAHVKHKEQI.

Residues M1 to Q24 are Cytoplasmic-facing. A helical transmembrane segment spans residues A25–S42. At V43 to F56 the chain is on the extracellular side. Residues L57 to A74 form a helical membrane-spanning segment. Residues G75 to S78 are Cytoplasmic-facing. Positions G79–F92 form an intramembrane region, discontinuously helical. The short motif at N83 to A85 is the NPA 1 element. Residues L93–K100 are Cytoplasmic-facing. A helical membrane pass occupies residues L101–G121. The Extracellular segment spans residues L122–N159. The N-linked (GlcNAc...) asparagine glycan is linked to N141. The helical transmembrane segment at G160 to A177 threads the bilayer. The Cytoplasmic segment spans residues I178 to G189. A helical membrane pass occupies residues L190 to M206. Topologically, residues G207 to S210 are extracellular. The discontinuously helical intramembrane region spans G211 to L224. The NPA 2 signature appears at N215–A217. Over F225 to W242 the chain is Extracellular. A helical membrane pass occupies residues W243 to M264. At I265 to I292 the chain is on the cytoplasmic side.

It belongs to the MIP/aquaporin (TC 1.A.8) family. Homotetramer; each monomer provides an independent glycerol/water pore. Could also exist in other oligomeric states. In terms of tissue distribution, widely expressed in epithelial cells of kidney (collecting ducts) and airways, in keratinocytes, immature dendritic cells and erythrocytes. Isoform 2 is not detectable in erythrocytes at the protein level.

It localises to the cell membrane. It is found in the basolateral cell membrane. It carries out the reaction glycerol(in) = glycerol(out). It catalyses the reaction H2O(in) = H2O(out). The catalysed reaction is H2O2(out) = H2O2(in). The enzyme catalyses urea(in) = urea(out). Glycerol transport is regulated by pH, with the porin being permeable to glycerol at pH 7.4 but not at pH 5.5. Water permeability, however, is not influenced by pH. In terms of biological role, aquaglyceroporins form homotetrameric transmembrane channels, with each monomer independently mediating glycerol and water transport across the plasma membrane along their osmotic gradient. Could also be permeable to urea. Also participates in cell permeability to H2O2 and H2O2-mediated signaling. In skin, transports glycerol to the epidermis and stratum corneum, where it maintains hydration, elasticity, and supports lipid biosynthesis for barrier repair. In kidney, contributes to the reabsorption of water, helping the body maintain proper fluid balance. The polypeptide is Aquaporin-3 (Homo sapiens (Human)).